The chain runs to 494 residues: ATP synthase subunit beta (494 aa).

ATP is bound at residue G177–T184.

It belongs to the ATPase alpha/beta chains family. As to quaternary structure, F-type ATPases have 2 components, CF(1) - the catalytic core - and CF(0) - the membrane proton channel. CF(1) has five subunits: alpha(3), beta(3), gamma(1), delta(1), epsilon(1). CF(0) has three main subunits: a(1), b(2) and c(9-12). The alpha and beta chains form an alternating ring which encloses part of the gamma chain. CF(1) is attached to CF(0) by a central stalk formed by the gamma and epsilon chains, while a peripheral stalk is formed by the delta and b chains.

Its subcellular location is the cell membrane. It carries out the reaction ATP + H2O + 4 H(+)(in) = ADP + phosphate + 5 H(+)(out). Its function is as follows. Produces ATP from ADP in the presence of a proton gradient across the membrane. The catalytic sites are hosted primarily by the beta subunits. This is ATP synthase subunit beta from Bifidobacterium adolescentis (strain ATCC 15703 / DSM 20083 / NCTC 11814 / E194a).